The sequence spans 941 residues: Isoleucine--tRNA ligase (941 aa).

The 'HIGH' region motif lies at 69 to 79 (PYANGDIHIGH). L-isoleucyl-5'-AMP is bound at residue Glu589. The 'KMSKS' region signature appears at 630 to 634 (KMSKS). Lys633 contributes to the ATP binding site. The Zn(2+) site is built by Cys915, Cys918, Cys932, and Cys935.

The protein belongs to the class-I aminoacyl-tRNA synthetase family. IleS type 1 subfamily. As to quaternary structure, monomer. The cofactor is Zn(2+).

The protein localises to the cytoplasm. It carries out the reaction tRNA(Ile) + L-isoleucine + ATP = L-isoleucyl-tRNA(Ile) + AMP + diphosphate. In terms of biological role, catalyzes the attachment of isoleucine to tRNA(Ile). As IleRS can inadvertently accommodate and process structurally similar amino acids such as valine, to avoid such errors it has two additional distinct tRNA(Ile)-dependent editing activities. One activity is designated as 'pretransfer' editing and involves the hydrolysis of activated Val-AMP. The other activity is designated 'posttransfer' editing and involves deacylation of mischarged Val-tRNA(Ile). This Zymomonas mobilis subsp. mobilis (strain ATCC 31821 / ZM4 / CP4) protein is Isoleucine--tRNA ligase.